The sequence spans 114 residues: Transmembrane protein 256 homolog (114 aa).

Residues 1 to 25 (MAAGRVWGRLGAVSGALAVTAGAYG) form the signal peptide. The Extracellular segment spans residues 26–64 (AHGFRRSDRDEYLKELFETGNRYHFLHSLALLAVPHCRR). A helical membrane pass occupies residues 65–85 (PLLAGSLLTSGIVLFSGTFYY). At 86 to 93 (QALSGDPT) the chain is on the cytoplasmic side. A helical membrane pass occupies residues 94–114 (LTKAAPYGGTLLILGWAAMAL).

Belongs to the TMEM256 family.

The protein resides in the cell membrane. The sequence is that of Transmembrane protein 256 homolog from Bufo gargarizans (Asian toad).